Here is a 234-residue protein sequence, read N- to C-terminus: Biotin transport ATP-binding protein BioM (234 aa).

Residues 1 to 230 (MQAIDIGHVT…YIAAMQALAR (230 aa)) form the ABC transporter domain. Position 35–42 (35–42 (GRNGAGKS)) interacts with ATP.

It belongs to the ABC transporter superfamily. As to quaternary structure, part of a biotin transporter holocomplex composed of BioM, BioN and BioY. BioMN complexes can be readily purified, but not BioMY complexes. Only the BioMNY complex has ATPase activity.

It localises to the cell inner membrane. In terms of biological role, required for biotin uptake under very low (pM) biotin concentrations but not under higher (nM) concentrations. The polypeptide is Biotin transport ATP-binding protein BioM (bioM) (Rhodobacter capsulatus (strain ATCC BAA-309 / NBRC 16581 / SB1003)).